The primary structure comprises 424 residues: Gamma-glutamyl phosphate reductase (424 aa).

This sequence belongs to the gamma-glutamyl phosphate reductase family.

Its subcellular location is the cytoplasm. The enzyme catalyses L-glutamate 5-semialdehyde + phosphate + NADP(+) = L-glutamyl 5-phosphate + NADPH + H(+). It functions in the pathway amino-acid biosynthesis; L-proline biosynthesis; L-glutamate 5-semialdehyde from L-glutamate: step 2/2. Functionally, catalyzes the NADPH-dependent reduction of L-glutamate 5-phosphate into L-glutamate 5-semialdehyde and phosphate. The product spontaneously undergoes cyclization to form 1-pyrroline-5-carboxylate. This is Gamma-glutamyl phosphate reductase from Dehalococcoides mccartyi (strain ATCC BAA-2266 / KCTC 15142 / 195) (Dehalococcoides ethenogenes (strain 195)).